We begin with the raw amino-acid sequence, 344 residues long: Phenylalanine--tRNA ligase alpha subunit (344 aa).

Residue Glu-256 coordinates Mg(2+).

This sequence belongs to the class-II aminoacyl-tRNA synthetase family. Phe-tRNA synthetase alpha subunit type 1 subfamily. As to quaternary structure, tetramer of two alpha and two beta subunits. It depends on Mg(2+) as a cofactor.

The protein resides in the cytoplasm. The enzyme catalyses tRNA(Phe) + L-phenylalanine + ATP = L-phenylalanyl-tRNA(Phe) + AMP + diphosphate + H(+). The sequence is that of Phenylalanine--tRNA ligase alpha subunit from Anoxybacillus flavithermus (strain DSM 21510 / WK1).